A 217-amino-acid chain; its full sequence is Large ribosomal subunit protein uL3 (217 aa).

Residues 137–160 form a disordered region; sequence VSASHGSHRNHRKPGSIGASSTPS.

Belongs to the universal ribosomal protein uL3 family. As to quaternary structure, part of the 50S ribosomal subunit. Forms a cluster with proteins L14 and L19.

Its function is as follows. One of the primary rRNA binding proteins, it binds directly near the 3'-end of the 23S rRNA, where it nucleates assembly of the 50S subunit. This Clavibacter michiganensis subsp. michiganensis (strain NCPPB 382) protein is Large ribosomal subunit protein uL3.